The primary structure comprises 84 residues: Mitochondrial import inner membrane translocase subunit Tim9 (84 aa).

The Twin CX3C motif signature appears at 28–52 (CFMDCVKDFTTREVKPEETTCSESC). Disulfide bonds link Cys-28-Cys-52 and Cys-32-Cys-48.

The protein belongs to the small Tim family. As to quaternary structure, heterohexamer; composed of 3 copies of TIMM9 and 3 copies of TIMM10/TIM10A, named soluble 70 kDa complex. The complex forms a 6-bladed alpha-propeller structure and associates with the TIMM22 component of the TIM22 complex. Interacts with multi-pass transmembrane proteins in transit.

It is found in the mitochondrion inner membrane. Mitochondrial intermembrane chaperone that participates in the import and insertion of multi-pass transmembrane proteins into the mitochondrial inner membrane. May also be required for the transfer of beta-barrel precursors from the TOM complex to the sorting and assembly machinery (SAM complex) of the outer membrane. Acts as a chaperone-like protein that protects the hydrophobic precursors from aggregation and guide them through the mitochondrial intermembrane space. This Danio rerio (Zebrafish) protein is Mitochondrial import inner membrane translocase subunit Tim9 (timm9).